The primary structure comprises 286 residues: Bifunctional protein FolD (286 aa).

NADP(+)-binding positions include 165-167, serine 190, and valine 231; that span reads GRS.

The protein belongs to the tetrahydrofolate dehydrogenase/cyclohydrolase family. Homodimer.

It carries out the reaction (6R)-5,10-methylene-5,6,7,8-tetrahydrofolate + NADP(+) = (6R)-5,10-methenyltetrahydrofolate + NADPH. The enzyme catalyses (6R)-5,10-methenyltetrahydrofolate + H2O = (6R)-10-formyltetrahydrofolate + H(+). It functions in the pathway one-carbon metabolism; tetrahydrofolate interconversion. Catalyzes the oxidation of 5,10-methylenetetrahydrofolate to 5,10-methenyltetrahydrofolate and then the hydrolysis of 5,10-methenyltetrahydrofolate to 10-formyltetrahydrofolate. This chain is Bifunctional protein FolD, found in Bacillus thuringiensis (strain Al Hakam).